Consider the following 56-residue polypeptide: Small integral membrane protein 39 (56 aa).

Residues 33–53 (VVVSAVLALLVLINVVLIFLL) form a helical membrane-spanning segment.

It localises to the membrane. In Homo sapiens (Human), this protein is Small integral membrane protein 39.